Reading from the N-terminus, the 103-residue chain is Phosphoribosyl-ATP pyrophosphatase (103 aa).

It belongs to the PRA-PH family.

The protein localises to the cytoplasm. The catalysed reaction is 1-(5-phospho-beta-D-ribosyl)-ATP + H2O = 1-(5-phospho-beta-D-ribosyl)-5'-AMP + diphosphate + H(+). Its pathway is amino-acid biosynthesis; L-histidine biosynthesis; L-histidine from 5-phospho-alpha-D-ribose 1-diphosphate: step 2/9. This is Phosphoribosyl-ATP pyrophosphatase from Listeria monocytogenes serotype 4a (strain HCC23).